The sequence spans 104 residues: UPF0145 protein Hlac_1015 (104 aa).

It belongs to the UPF0145 family.

This chain is UPF0145 protein Hlac_1015, found in Halorubrum lacusprofundi (strain ATCC 49239 / DSM 5036 / JCM 8891 / ACAM 34).